The following is a 616-amino-acid chain: Chaperone protein HscA (616 aa).

Belongs to the heat shock protein 70 family.

In terms of biological role, chaperone involved in the maturation of iron-sulfur cluster-containing proteins. Has a low intrinsic ATPase activity which is markedly stimulated by HscB. Involved in the maturation of IscU. The polypeptide is Chaperone protein HscA (Salmonella heidelberg (strain SL476)).